The primary structure comprises 434 residues: MNALAKIKAFRSYVPLLQGNTKTIYLNQSFQAPMNMLVSTALQGYINEGLYNPHPKPMWKERTEETRSLLAKLLNASTKDSITFTRDTTEGLNLFQRSLKWKPGDNVVILDNEHPNQGFGWIALQNDGLEVRLVPNEGQYHANASTFAPYVDSRTKAIGLSSVMFHSGQKNDVKDIANAFRPKGIHVLADLTQQVGLSKIDVQDLNVSACAFSCHKGLGCPTGLGVLYVSPLAISELRSTPPFVGGGAVEDFKEDLKLKLNAKYHQSALRYEHTNNAYMLITALRAYLKFLLKVGISNVERYLQGLGKDLIKELESLNVSVIGYKDFDKHSSHSYVLKILNPEWFDFLRQQGVCVSRFESGIRVSFGLYNTSKDIIKFISVIRKGLALNIPLNIRPPQRIAVMDNPLVGISDEAIAAMKLPANTLSNRPLAANI.

An N6-(pyridoxal phosphate)lysine modification is found at lysine 216.

This is an uncharacterized protein from Schizosaccharomyces pombe (strain 972 / ATCC 24843) (Fission yeast).